A 291-amino-acid chain; its full sequence is Lysosomal amino acid transporter 1 homolog (291 aa).

Residues 1-37 (MVWKKLGSRNFSSCPSGSIQWIWDVLGECAQDGWDEA) are Lumenal-facing. N10 is a glycosylation site (N-linked (GlcNAc...) asparagine). The PQ-loop 1 domain occupies 34 to 100 (WDEASVGLGL…LADQLPLQTY (67 aa)). Residues 38 to 58 (SVGLGLISILCFAASTFPQFI) traverse the membrane as a helical segment. The Cytoplasmic segment spans residues 59-71 (KAYKTGNMDQALS). A helical transmembrane segment spans residues 72–92 (LWFLLGWIGGDSCNLIGSFLA). Residues 93 to 98 (DQLPLQ) lie on the Lumenal side of the membrane. The helical transmembrane segment at 99–119 (TYTAVYYVLADLVMLTLYFYY) threads the bilayer. At 120-134 (KFRTRPSLLSAPINS) the chain is on the cytoplasmic side. Residues 135–155 (VLLFLMGMACATPLLSAAGPV) traverse the membrane as a helical segment. The Lumenal segment spans residues 156–182 (AAPREAFRGRALLSVESGSKPFTRQEV). The helical transmembrane segment at 183 to 203 (IGFVIGSISSVLYLLSRLPQI) threads the bilayer. A PQ-loop 2 domain is found at 184-243 (GFVIGSISSVLYLLSRLPQIRTNFLRKSTQGISYSLFALVMLGNTLYGLSVLLKNPEEGQ). Residues 204–214 (RTNFLRKSTQG) lie on the Cytoplasmic side of the membrane. Residues 215 to 235 (ISYSLFALVMLGNTLYGLSVL) traverse the membrane as a helical segment. Residues 236-254 (LKNPEEGQSEGSYLLHHLP) are Lumenal-facing. The chain crosses the membrane as a helical span at residues 255–275 (WLVGSLGVLLLDTIISIQFLV). The Cytoplasmic portion of the chain corresponds to 276 to 291 (YRRSTAASELEPLLPS). The short motif at 288–289 (LL) is the Di-leucine motif element.

This sequence belongs to the laat-1 family.

It is found in the lysosome membrane. Functionally, amino acid transporter that specifically mediates the pH-dependent export of the cationic amino acids arginine, histidine and lysine from lysosomes. The sequence is that of Lysosomal amino acid transporter 1 homolog from Homo sapiens (Human).